The following is a 473-amino-acid chain: MKTLYSLRRFSHVETLFNTTLTVAGRDQETTGFAWWAGNARLINLSGKLLGAHVAHAGLIVFWAGAMNLFEVAHFGPEKPMYEQGLILLPHLATLGWGVGPGGEIIDTFPYFVSGVLHLISSAVLGFGGIYHALLGPEIIEESFPLFRYVWKDRNKMTTILGIHLILLGIGAFLLVFKALYFGGVYDTWAPGGGDVRKITNLTLSPSIIFGFLLKSPFGGDGWIVSVDDLEDIIGGHVWVGSICIFGGIWHILTKPFAWARRALVWSGEAYLSYSLGALSLFGFTACCFVWFNNTAYPSEFYGPTGPEASQAQAFTFLVRDQRLGANVGAAQGPTGLGKYLMRSPTGEVIFGGETMRFWDLRAPWLEPLRGPNGLDLNRLKKDIQPWQERRSAEYMTHAPLGSLNSVGGVATEINAVNYVSPRSWLATSHFCLGFFFFVGHLWHAGRARAAAAGFEKGIDRDFEPVLSMTPLN.

The propeptide occupies 1 to 14 (MKTLYSLRRFSHVE). N-acetylthreonine is present on Thr15. Position 15 is a phosphothreonine (Thr15). Transmembrane regions (helical) follow at residues 69-93 (LFEV…PHLA), 134-155 (LLGP…KDRN), 178-200 (KALY…RKIT), 255-275 (KPFA…LSYS), and 291-312 (WFNN…ASQA). A [CaMn4O5] cluster-binding site is contributed by Glu367. Residues 447–471 (RARAAAAGFEKGIDRDFEPVLSMTP) traverse the membrane as a helical segment.

This sequence belongs to the PsbB/PsbC family. PsbC subfamily. PSII is composed of 1 copy each of membrane proteins PsbA, PsbB, PsbC, PsbD, PsbE, PsbF, PsbH, PsbI, PsbJ, PsbK, PsbL, PsbM, PsbT, PsbX, PsbY, PsbZ, Psb30/Ycf12, at least 3 peripheral proteins of the oxygen-evolving complex and a large number of cofactors. It forms dimeric complexes. Binds multiple chlorophylls and provides some of the ligands for the Ca-4Mn-5O cluster of the oxygen-evolving complex. It may also provide a ligand for a Cl- that is required for oxygen evolution. PSII binds additional chlorophylls, carotenoids and specific lipids. serves as cofactor.

It localises to the plastid membrane. One of the components of the core complex of photosystem II (PSII). It binds chlorophyll and helps catalyze the primary light-induced photochemical processes of PSII. PSII is a light-driven water:plastoquinone oxidoreductase, using light energy to abstract electrons from H(2)O, generating O(2) and a proton gradient subsequently used for ATP formation. The polypeptide is Photosystem II CP43 reaction center protein (Cuscuta gronovii (Common dodder)).